The following is a 256-amino-acid chain: 5-keto-4-deoxy-D-glucarate aldolase (256 aa).

Catalysis depends on histidine 50, which acts as the Proton acceptor. Glutamine 151 contacts substrate. A Mg(2+)-binding site is contributed by glutamate 153. Substrate contacts are provided by serine 178 and aspartate 179. Aspartate 179 is a Mg(2+) binding site.

It belongs to the HpcH/HpaI aldolase family. KDGluc aldolase subfamily. Homohexamer; trimer of dimers. It depends on Mg(2+) as a cofactor.

It carries out the reaction 5-dehydro-4-deoxy-D-glucarate = 2-hydroxy-3-oxopropanoate + pyruvate. The enzyme catalyses 2-dehydro-3-deoxy-D-glucarate = 2-hydroxy-3-oxopropanoate + pyruvate. It functions in the pathway carbohydrate acid metabolism; galactarate degradation; D-glycerate from galactarate: step 2/3. Its function is as follows. Catalyzes the reversible retro-aldol cleavage of both 5-keto-4-deoxy-D-glucarate and 2-keto-3-deoxy-D-glucarate to pyruvate and tartronic semialdehyde. The protein is 5-keto-4-deoxy-D-glucarate aldolase of Shigella sonnei (strain Ss046).